A 461-amino-acid polypeptide reads, in one-letter code: METLFNKKLTVGGRDQESTGFAWWAGNARLINVSGKLLGAHVAHAGLIVFWTGAMNLFEVAHFVPQKPMYEQGLILLPHLATLGFGVGFDGIVLDTYPFFVCGVLHLISSAVLGFGGVFHSLAGPDTLEESFRFFGYTWKRKKKLAAILGIHLCFLGLGALLLAWKAMYGGGVYDTWWPGGGDVRSITNPTLNPFIIFGYLVKSPFGGEGWIVSVDSMEYVIGGHIWIGILLVSGGFWHICSRPSPWVVRTFVWSGEAYLSYSLGAVATMGFIAVPMVWFNNTVYPSEFYGPTGPEASQAQAFTFLIRDQRLGTNIASAQGPTGLGKYLMKSPTGEIIFGGETMRFWDFRGPWLEPLRGPNGLDLNKLKNDVQPWQERRAAEYMTHAPLGSLNSVGGVATEINAVNFVNPRSWLATSHFVLAFFFFVGHLWHAGRARAAAIGFEKGIDRSREIARKLKPLD.

Residues 1–2 (ME) constitute a propeptide that is removed on maturation. T3 bears the N-acetylthreonine mark. At T3 the chain carries Phosphothreonine. Helical transmembrane passes span 57–81 (LFEV…PHLA), 122–143 (LAGP…KRKK), 166–188 (KAMY…RSIT), 243–263 (RPSP…LSYS), and 279–300 (WFNN…ASQA). E355 serves as a coordination point for [CaMn4O5] cluster. A helical transmembrane segment spans residues 435–459 (RARAAAIGFEKGIDRSREIARKLKP).

This sequence belongs to the PsbB/PsbC family. PsbC subfamily. In terms of assembly, PSII is composed of 1 copy each of membrane proteins PsbA, PsbB, PsbC, PsbD, PsbE, PsbF, PsbH, PsbI, PsbJ, PsbK, PsbL, PsbM, PsbT, PsbY, PsbZ, Psb30/Ycf12, at least 3 peripheral proteins of the oxygen-evolving complex and a large number of cofactors. It forms dimeric complexes. The cofactor is Binds multiple chlorophylls and provides some of the ligands for the Ca-4Mn-5O cluster of the oxygen-evolving complex. It may also provide a ligand for a Cl- that is required for oxygen evolution. PSII binds additional chlorophylls, carotenoids and specific lipids..

The protein resides in the plastid. It is found in the chloroplast thylakoid membrane. Its function is as follows. One of the components of the core complex of photosystem II (PSII). It binds chlorophyll and helps catalyze the primary light-induced photochemical processes of PSII. PSII is a light-driven water:plastoquinone oxidoreductase, using light energy to abstract electrons from H(2)O, generating O(2) and a proton gradient subsequently used for ATP formation. This is Photosystem II CP43 reaction center protein from Euglena gracilis.